Consider the following 198-residue polypeptide: MNREEQFGILESLLFAAGDAGLSTEQLTEVMEITHIEALNLLELLSERYNGNADRGLILLELAGTFQLATKKAHAEYLRKLVEVPSNTVLSQASLETLAIIAYRQPVTRMEVDEVRGVQTDGPIRTLVAKGLVTDKGRVDGAGRAKLYVTTSEFLDAFGLNSLEDLPKLADPEADDPDQNEMDLFFDRFNQSKEQEEE.

The interval 167–198 (PKLADPEADDPDQNEMDLFFDRFNQSKEQEEE) is disordered. A compositionally biased stretch (acidic residues) spans 172–181 (PEADDPDQNE).

The protein belongs to the ScpB family. In terms of assembly, homodimer. Homodimerization may be required to stabilize the binding of ScpA to the Smc head domains. Component of a cohesin-like complex composed of ScpA, ScpB and the Smc homodimer, in which ScpA and ScpB bind to the head domain of Smc. The presence of the three proteins is required for the association of the complex with DNA.

It localises to the cytoplasm. Functionally, participates in chromosomal partition during cell division. May act via the formation of a condensin-like complex containing Smc and ScpA that pull DNA away from mid-cell into both cell halves. The sequence is that of Segregation and condensation protein B from Listeria welshimeri serovar 6b (strain ATCC 35897 / DSM 20650 / CCUG 15529 / CIP 8149 / NCTC 11857 / SLCC 5334 / V8).